The chain runs to 211 residues: Mitotic spindle assembly checkpoint protein MAD2B (211 aa).

Residues 13 to 203 form the HORMA domain; that stretch reads QVVADILCEF…SDILKMQLYV (191 aa).

Homooligomer. Interacts with rev1. Interacts with rev3l. Interacts with fzr1 (in complex with the anaphase promoting complex APC). May interact with cdc20.

It is found in the nucleus. It localises to the cytoplasm. The protein localises to the cytoskeleton. The protein resides in the spindle. Its function is as follows. Adapter protein able to interact with different proteins and involved in different biological processes. Mediates the interaction between the error-prone DNA polymerase zeta catalytic subunit rev3l and the inserter polymerase rev1, thereby mediating the second polymerase switching in translesion DNA synthesis. Translesion DNA synthesis releases the replication blockade of replicative polymerases, stalled in presence of DNA lesions. May also play a role in signal transduction in response to DNA damage. May regulate the activation of the anaphase promoting complex APC thereby regulating progression through the cell cycle. Through transcriptional regulation may play a role in epithelial-mesenchymal transdifferentiation. Inhibits the fzr1-APC complex activity during mitosis. Plays a role in progression of mitosis. This is Mitotic spindle assembly checkpoint protein MAD2B (mad2l2) from Xenopus laevis (African clawed frog).